Reading from the N-terminus, the 827-residue chain is N-terminal kinase-like protein (827 aa).

A Protein kinase domain is found at 1–309; sequence MWFWSRDPAR…PEDFCRHKIL (309 aa). HEAT repeat units lie at residues 345 to 383, 384 to 422, and 502 to 540; these read IIPV…VNAQ, IFPH…LNME, and VLPV…EDPS. Residues 586–624 are compositionally biased toward low complexity; that stretch reads DAAASEGASAPSTASEASKPDTAPSSSAPPAAASTAPTS. The tract at residues 586 to 827 is disordered; it reads DAAASEGASA…PLKLGVRKLD (242 aa). Over residues 630–640 the composition is skewed to basic and acidic residues; it reads EKGAPDNSLDR. Residues 641-652 show a composition bias toward acidic residues; that stretch reads WDDEDWGSLEDA. A compositionally biased stretch (basic and acidic residues) spans 667-678; the sequence is DWGHGKTQEKTV. Composition is skewed to polar residues over residues 679–690 and 737–746; these read DFSSSRSKTKQV and NWDTSGSSGR. The segment covering 774 to 783 has biased composition (acidic residues); that stretch reads GGDDNWESVE. Positions 788-817 form a coiled coil; it reads LSKAEMARKKREERQKEIEAKRAERRAAKG. Positions 792–814 are enriched in basic and acidic residues; the sequence is EMARKKREERQKEIEAKRAERRA.

This sequence belongs to the protein kinase superfamily.

Regulates COPI-mediated retrograde protein traffic at the interface between the Golgi apparatus and the endoplasmic reticulum. Involved in the maintenance of the Golgi apparatus morphology. In Xenopus tropicalis (Western clawed frog), this protein is N-terminal kinase-like protein (scyl1).